We begin with the raw amino-acid sequence, 483 residues long: Regulatory protein ViaA (483 aa).

The protein belongs to the ViaA family. As to quaternary structure, homodimer. Interacts with RavA.

The protein localises to the cytoplasm. Its function is as follows. Component of the RavA-ViaA chaperone complex, which may act on the membrane to optimize the function of some of the respiratory chains. ViaA stimulates the ATPase activity of RavA. The polypeptide is Regulatory protein ViaA (Shigella sonnei (strain Ss046)).